We begin with the raw amino-acid sequence, 724 residues long: ATPase family protein 2 homolog (724 aa).

ATP contacts are provided by residues 281-287 (PGSGKTL) and 503-508 (GCSKTL).

The protein belongs to the AAA ATPase family. AFG2 subfamily. In terms of assembly, homohexamer; ATP binding induces oligomerization. Forms a ring-shaped particle of about 12 nm diameter, that displays 6-fold radial symmetry. Interacts (via N-terminus) with kinase air-2; the interaction is direct and inhibits air-2 kinase activity in an ATPase-dependent manner.

The protein localises to the cytoplasm. The catalysed reaction is ATP + H2O = ADP + phosphate + H(+). Functionally, ATP-dependent chaperone which uses the energy provided by ATP hydrolysis to generate mechanical force to disassemble protein complexes. Required for various steps of embryonic mitosis including centrosome duplication, spindle assembly, ER dynamics and cell cycle progression. Regulates the stability and activity of kinase air-2, a component of the chromosomal passenger complex (CPC). Inhibits air-2 kinase activity from metaphase to late telophase and negatively regulates air-2 stability during mitotic exit. Controls ER transition into sheet-like structures at the onset of mitosis, possibly by regulating homotypic membrane fusion. This is ATPase family protein 2 homolog from Caenorhabditis elegans.